We begin with the raw amino-acid sequence, 268 residues long: MKRCCEGVGLPCLFKGVGMASSRPPKYLLVFDFDGTIINESSDDSIVRAAPGQALPEHIRQSFREGFYNEYMQRVLAYMGDQGVKMGDFKAVYENIPLSPGMPDLFQFLSKNHELFEIILISDANMFGIECKLRAAGFYSLFRKIFSNPSSFDKRGYFTLGPYHSHKCLDCPANTCKRKILTEYLAERAQEEVEFERVFYVGDGANDFCPSVTLTSADVAFPRKGYPMHQMTQEMEKKQPGTFQATVVPWESATEVARYLQELLKKKC.

D32 serves as the catalytic Nucleophile. 2 residues coordinate Mg(2+): D32 and D34. D34 (proton donor) is an active-site residue. The substrate site is built by D43 and D123. D203 lines the Mg(2+) pocket.

This sequence belongs to the HAD-like hydrolase superfamily. PHOSPHO family. Requires Mg(2+) as cofactor. Expressed at sites of mineralization in bone and cartilage. Highly expressed in hypertrophic chondrocytes compared to non-chondrogenic tissues. Expressed in chondrocytes but not in heart, liver, lung, kidney, spleen, muscle, adipose tissues not duodenum. In diaphyseal cortical bone, it is expressed in the osteoid layer of the periosteum, forming surfaces of growing osteons, and newly formed osteocytes, whereas it is not expressed in the endosteum and closed osteons. In growth plate cartilage, it is limited to the early hypertrophic chondrocytes and the ossification groove of Ranvier. Highly expressed on the mineralization surfaces of the cartilage remnants and trabecular bone within the primary spongiosa. Expressed in 17-day-old embryonic calvaria, the osteoid present on the intramembranous and periosteal bone surfaces but not in soft tissues examined.

The protein resides in the extracellular vesicle. The enzyme catalyses phosphoethanolamine + H2O = ethanolamine + phosphate. It catalyses the reaction phosphocholine + H2O = choline + phosphate. In terms of biological role, phosphatase that has a high activity toward phosphoethanolamine (PEA) and phosphocholine (PCho). Involved in the generation of inorganic phosphate for bone mineralization. The protein is Phosphoethanolamine/phosphocholine phosphatase (PHOSPHO1) of Gallus gallus (Chicken).